A 191-amino-acid chain; its full sequence is FMN-dependent NADH:quinone oxidoreductase 1 (191 aa).

FMN is bound by residues S10 and 16–18; that span reads SVS.

Belongs to the azoreductase type 1 family. As to quaternary structure, homodimer. It depends on FMN as a cofactor.

It carries out the reaction 2 a quinone + NADH + H(+) = 2 a 1,4-benzosemiquinone + NAD(+). The catalysed reaction is N,N-dimethyl-1,4-phenylenediamine + anthranilate + 2 NAD(+) = 2-(4-dimethylaminophenyl)diazenylbenzoate + 2 NADH + 2 H(+). Quinone reductase that provides resistance to thiol-specific stress caused by electrophilic quinones. Its function is as follows. Also exhibits azoreductase activity. Catalyzes the reductive cleavage of the azo bond in aromatic azo compounds to the corresponding amines. This is FMN-dependent NADH:quinone oxidoreductase 1 from Jannaschia sp. (strain CCS1).